Consider the following 1219-residue polypeptide: FYVE, RhoGEF and PH domain-containing protein 5 (1219 aa).

Disordered stretches follow at residues 1-85, 94-113, 201-227, and 310-367; these read MGSP…SCQI, EEDF…PTES, SDTQ…GQVP, and GRES…PSSV. Over residues 23-50 the composition is skewed to acidic residues; sequence EVFEEDSADAAEGEDQIEQEEPPNCDEE. Polar residues predominate over residues 201 to 214; that stretch reads SDTQAASGTLSGYS. Residues 319-337 show a composition bias toward basic and acidic residues; that stretch reads REPEGAGLDSHRVRRKEDN. Positions 346–356 are enriched in polar residues; the sequence is SSGSFSQRSHL. Positions 357-367 are enriched in low complexity; that stretch reads PSSGTSTPSSV. At T555 the chain carries Phosphothreonine. A compositionally biased stretch (low complexity) spans 586-599; it reads ESKQQSSEQEAESA. The disordered stretch occupies residues 586-644; that stretch reads ESKQQSSEQEAESAYTEPYKVCPISAAPREDLTSDEEQGSSEEEDSASRDPSLSHKGEG. A compositionally biased stretch (acidic residues) spans 618–630; sequence TSDEEQGSSEEED. The segment covering 631 to 644 has biased composition (basic and acidic residues); that stretch reads SASRDPSLSHKGEG. Residues 647–840 form the DH domain; sequence RALVIAQELL…SKVTDRANES (194 aa). Residues 869-963 form the PH 1 domain; sequence EFLKEGTLMR…WHYCLSRALP (95 aa). The FYVE-type zinc-finger motif lies at 998–1057; sequence VTHAMMCMNCGCDFSLTVRRHHCHACGKIVCRNCSRNKYPLKCLKNRMAKVCDGCFRELK. Residues C1004, C1007, C1020, C1023, C1028, C1031, C1049, and C1052 each coordinate Zn(2+). One can recognise a PH 2 domain in the interval 1120 to 1218; it reads GSAISGYLSR…WMEAMEDASV (99 aa).

As to expression, expressed in highly vascularized tissues, such as lung, kidney and ovary.

Its subcellular location is the cytoplasm. It localises to the cytoskeleton. The protein localises to the cell projection. It is found in the ruffle membrane. The protein resides in the endoplasmic reticulum. Its subcellular location is the golgi apparatus. It localises to the early endosome. Functionally, activates CDC42, a member of the Ras-like family of Rho- and Rac proteins, by exchanging bound GDP for free GTP. Mediates VEGF-induced CDC42 activation. May regulate proangiogenic action of VEGF in vascular endothelial cells, including network formation, directional movement and proliferation. May play a role in regulating the actin cytoskeleton and cell shape. The polypeptide is FYVE, RhoGEF and PH domain-containing protein 5 (Fgd5) (Mus musculus (Mouse)).